The primary structure comprises 695 residues: WD repeat-containing protein 93 (695 aa).

The interval 1–35 is disordered; it reads MSSFKGNQAQKRRLSVFPKGPLEIPSPTEADWPKD. The stretch at 421–460 is one WD repeat; that stretch reads PCAAPIVMSQISSFSSYLALVCEDGVLILWDLAEGFLFGV.

In terms of tissue distribution, testis-specific. Expressed in spermatogonia, spermatocytes and spermatids.

This Mus musculus (Mouse) protein is WD repeat-containing protein 93 (Wdr93).